The chain runs to 406 residues: Argininosuccinate synthase (406 aa).

8–16 (AYSGGLDTS) lines the ATP pocket. Tyr86 is an L-citrulline binding site. Position 116 (Gly116) interacts with ATP. L-aspartate contacts are provided by Thr118, Asn122, and Asp123. L-citrulline is bound at residue Asn122. Residues Arg126, Ser174, Ser183, Glu259, and Tyr271 each coordinate L-citrulline.

Belongs to the argininosuccinate synthase family. Type 1 subfamily. In terms of assembly, homotetramer.

It is found in the cytoplasm. It carries out the reaction L-citrulline + L-aspartate + ATP = 2-(N(omega)-L-arginino)succinate + AMP + diphosphate + H(+). The protein operates within amino-acid biosynthesis; L-arginine biosynthesis; L-arginine from L-ornithine and carbamoyl phosphate: step 2/3. This Oenococcus oeni (strain ATCC BAA-331 / PSU-1) protein is Argininosuccinate synthase.